Consider the following 161-residue polypeptide: MSTSPTLVFTSSDGVDITVDRDVAERSLLIKNMLEDLGETGEAIPIPNVNEAVLKKVIEWCTHHKNDPPSTGDDDDSRRKTTDIDEWDQKFMQVDQEMLFEIILAANYLDIKGLLDVGCKTVANMIKGKSPEEIRKTFNIQNDFTPEEEDQIRRENEWAEE.

The tract at residues 103 to 161 (ILAANYLDIKGLLDVGCKTVANMIKGKSPEEIRKTFNIQNDFTPEEEDQIRRENEWAEE) is interaction with the F-box domain of F-box proteins.

The protein belongs to the SKP1 family. As to quaternary structure, component of the SCF (SKP1-CUL1-F-box protein) E3 ubiquitin ligase complexes.

The protein operates within protein modification; protein ubiquitination. Functionally, essential component of the SCF (SKP1-CUL1-F-box protein) E3 ubiquitin ligase complexes, which mediate the ubiquitination and subsequent proteasomal degradation of target proteins. Controls sulfur metabolite repression, probably by mediating the inactivation or degradation of the metR transcription factor. The sequence is that of E3 ubiquitin ligase complex SCF subunit sconC (sconC) from Aspergillus terreus (strain NIH 2624 / FGSC A1156).